We begin with the raw amino-acid sequence, 21 residues long: MKVSIEINGTTVSXEVXDRTL.

As to quaternary structure, heterotetramer composed of an alpha, a beta and two gamma chains. It depends on [2Fe-2S] cluster as a cofactor.

Its function is as follows. Active with aldehydes and formate esters as substrates. This is DYE-linked aldehyde dehydrogenase, gamma chain from Amycolatopsis methanolica.